Consider the following 205-residue polypeptide: Imidazole glycerol phosphate synthase subunit HisH (205 aa).

The Glutamine amidotransferase type-1 domain occupies 1–205; the sequence is MVGIVNYNIG…RILKNFCEIG (205 aa). C79 serves as the catalytic Nucleophile. Catalysis depends on residues H186 and E188.

In terms of assembly, heterodimer of HisH and HisF.

It localises to the cytoplasm. The enzyme catalyses 5-[(5-phospho-1-deoxy-D-ribulos-1-ylimino)methylamino]-1-(5-phospho-beta-D-ribosyl)imidazole-4-carboxamide + L-glutamine = D-erythro-1-(imidazol-4-yl)glycerol 3-phosphate + 5-amino-1-(5-phospho-beta-D-ribosyl)imidazole-4-carboxamide + L-glutamate + H(+). The catalysed reaction is L-glutamine + H2O = L-glutamate + NH4(+). The protein operates within amino-acid biosynthesis; L-histidine biosynthesis; L-histidine from 5-phospho-alpha-D-ribose 1-diphosphate: step 5/9. Functionally, IGPS catalyzes the conversion of PRFAR and glutamine to IGP, AICAR and glutamate. The HisH subunit catalyzes the hydrolysis of glutamine to glutamate and ammonia as part of the synthesis of IGP and AICAR. The resulting ammonia molecule is channeled to the active site of HisF. The chain is Imidazole glycerol phosphate synthase subunit HisH from Wolinella succinogenes (strain ATCC 29543 / DSM 1740 / CCUG 13145 / JCM 31913 / LMG 7466 / NCTC 11488 / FDC 602W) (Vibrio succinogenes).